A 294-amino-acid polypeptide reads, in one-letter code: MSASAESTNATPYGTLPPTAAASARKPISLPRLLEMHARGEKLTMLTAYDATFAAVADAAGVECILVGDSLGMVCQGLSSTMGVTLQAMCYHIESVARGLRRAQATAWLIGDLPYGSYHESREQALRSAAALMQAGSHMVKLEGGGWTADTVRFLVERGIPVCAHLGLTPQTVHALGGYRVQGKTQESAALMKRQAHELQDAGAALLVLEMVPAALAAELTRELTHCATIGIGAGKDTAGQVLVLHDMLGINLGKMPKFVRNFMTGAPGVKEAMQAYVAAVKNGSFPDNTQHAW.

Residues 1 to 12 (MSASAESTNATP) show a composition bias toward polar residues. The segment at 1-21 (MSASAESTNATPYGTLPPTAA) is disordered. Positions 69 and 112 each coordinate Mg(2+). Residues 69–70 (DS), D112, and K141 contribute to the 3-methyl-2-oxobutanoate site. Residue E143 participates in Mg(2+) binding. E210 (proton acceptor) is an active-site residue.

The protein belongs to the PanB family. As to quaternary structure, homodecamer; pentamer of dimers. The cofactor is Mg(2+).

Its subcellular location is the cytoplasm. The catalysed reaction is 3-methyl-2-oxobutanoate + (6R)-5,10-methylene-5,6,7,8-tetrahydrofolate + H2O = 2-dehydropantoate + (6S)-5,6,7,8-tetrahydrofolate. The protein operates within cofactor biosynthesis; (R)-pantothenate biosynthesis; (R)-pantoate from 3-methyl-2-oxobutanoate: step 1/2. Catalyzes the reversible reaction in which hydroxymethyl group from 5,10-methylenetetrahydrofolate is transferred onto alpha-ketoisovalerate to form ketopantoate. This is 3-methyl-2-oxobutanoate hydroxymethyltransferase from Albidiferax ferrireducens (strain ATCC BAA-621 / DSM 15236 / T118) (Rhodoferax ferrireducens).